We begin with the raw amino-acid sequence, 369 residues long: Probable trehalose-phosphate phosphatase D (369 aa).

Positions 63-85 are disordered; sequence RASSPTRTRPGNISPLPESDEED.

It belongs to the trehalose phosphatase family. The cofactor is a divalent metal cation.

It carries out the reaction alpha,alpha-trehalose 6-phosphate + H2O = alpha,alpha-trehalose + phosphate. It participates in glycan biosynthesis; trehalose biosynthesis. Functionally, removes the phosphate from trehalose 6-phosphate to produce free trehalose. Trehalose accumulation in plant may improve abiotic stress tolerance. The polypeptide is Probable trehalose-phosphate phosphatase D (TPPD) (Arabidopsis thaliana (Mouse-ear cress)).